Here is an 86-residue protein sequence, read N- to C-terminus: BolA-like protein 2 (86 aa).

Met1 is modified (N-acetylmethionine).

It belongs to the BolA/IbaG family. As to quaternary structure, interacts with GLRX3; forms a heterotrimeric complex composed by two BOLA2 molecules and one GLRX3 molecule; linked by [2Fe-2S] clusters.

The protein resides in the cytoplasm. It is found in the nucleus. In terms of biological role, acts as a cytosolic iron-sulfur (Fe-S) cluster assembly factor that facilitates [2Fe-2S] cluster insertion into a subset of cytosolic proteins. Acts together with the monothiol glutaredoxin GLRX3. The protein is BolA-like protein 2 (Bola2) of Mus musculus (Mouse).